Here is a 229-residue protein sequence, read N- to C-terminus: uncharacterized protein (229 aa).

The interval 1 to 41 (MRSAKVGVARQLETKKPQTGRKISTSSRGTIHSQQSQPEDI) is disordered. A compositionally biased stretch (polar residues) spans 21-39 (RKISTSSRGTIHSQQSQPE). EF-hand domains are found at residues 48–83 (KELKEYRQLFNMFDTDGSGAIGNEELKQAMISIGLH), 84–119 (ANKAEIDNVIKEVDADGNGEIDFEEFCACMKKSQNI), 123–158 (TNEELIRECFEIFDQDRNGIITENEFKYIAKEFGDF), and 159–193 (DDELAEKVFRELDVSANGHLSADQFATIVEDYLLN). Residues aspartate 61, aspartate 63, serine 65, glutamate 72, aspartate 97, aspartate 99, asparagine 101, glutamate 103, glutamate 108, aspartate 136, aspartate 138, asparagine 140, and glutamate 147 each contribute to the Ca(2+) site. Positions 194–217 (DPKHDIDTGDSDVERYDDRHDDRA) are enriched in basic and acidic residues. A disordered region spans residues 194–229 (DPKHDIDTGDSDVERYDDRHDDRASPMPNHLSTVPE).

This is an uncharacterized protein from Caenorhabditis elegans.